We begin with the raw amino-acid sequence, 603 residues long: Alpha-1,2-mannosyltransferase algn-9 (603 aa).

The disordered stretch occupies residues 1 to 25 (MVTHRRKGGSGPPQKPPPRIVDRSS). Topologically, residues 1-108 (MVTHRRKGGS…EYSPVYAIRS (108 aa)) are lumenal. Residues 109-129 (YFYIYLHYIPASLFANLFGDT) form a helical membrane-spanning segment. Lys130 is a topological domain (cytoplasmic). A helical membrane pass occupies residues 131–151 (IVVFTLIRLTIGLFCLLGEYY). Topologically, residues 152 to 166 (AFDAICKKINIATGR) are lumenal. A helical membrane pass occupies residues 167–187 (FFILFSIFSSGMFLASTAFVP). Topologically, residues 188–195 (SSFCMAIT) are cytoplasmic. The chain crosses the membrane as a helical span at residues 196–216 (FYILGAYLNENWTAGIFCVAF). Residues 217–218 (ST) lie on the Lumenal side of the membrane. The chain crosses the membrane as a helical span at residues 219-239 (MVGWPFSAVLGLPIVADMLLL). Residues 240-245 (KGLRIR) lie on the Cytoplasmic side of the membrane. The helical transmembrane segment at 246–266 (FILTSLVIGLCIGGVQVITDS) threads the bilayer. The Lumenal portion of the chain corresponds to 267 to 310 (HYFGKTVLAPLNIFLYNVVSGPGPSLYGEEPLSFYIKNLFNNWN). The helical transmembrane segment at 311–331 (IVIFAAPFGFPLSLAYFTKVW) threads the bilayer. The Cytoplasmic portion of the chain corresponds to 332–343 (MSQDRNVALYQR). Residues 344–364 (FAPIILLAVTTAAWLLIFGSQ) traverse the membrane as a helical segment. Residues 365–370 (AHKEER) lie on the Lumenal side of the membrane. Residues 371-391 (FLFPIYPFIAFFAALALDATN) form a helical membrane-spanning segment. Residues 392-397 (RLCLKK) are Cytoplasmic-facing. A helical transmembrane segment spans residues 398 to 418 (LGMDNILSILFILCFAILSAS). At 419–603 (RTYSIHNNYG…TCTLYRKSNL (185 aa)) the chain is on the lumenal side. The N-linked (GlcNAc...) asparagine glycan is linked to Asn443.

This sequence belongs to the glycosyltransferase 22 family.

It is found in the endoplasmic reticulum membrane. It catalyses the reaction an alpha-D-Man-(1-&gt;2)-alpha-D-Man-(1-&gt;2)-alpha-D-Man-(1-&gt;3)-[alpha-D-Man-(1-&gt;3)-alpha-D-Man-(1-&gt;6)]-beta-D-Man-(1-&gt;4)-beta-D-GlcNAc-(1-&gt;4)-alpha-D-GlcNAc-diphospho-di-trans,poly-cis-dolichol + a di-trans,poly-cis-dolichyl beta-D-mannosyl phosphate = an alpha-D-Man-(1-&gt;2)-alpha-D-Man-(1-&gt;2)-alpha-D-Man-(1-&gt;3)-[alpha-D-Man-(1-&gt;2)-alpha-D-Man-(1-&gt;3)-alpha-D-Man-(1-&gt;6)]-beta-D-Man-(1-&gt;4)-beta-D-GlcNAc-(1-&gt;4)-alpha-D-GlcNAc-diphospho-di-trans,poly-cis-dolichol + a di-trans,poly-cis-dolichyl phosphate + H(+). The enzyme catalyses an alpha-D-Man-(1-&gt;2)-alpha-D-Man-(1-&gt;2)-alpha-D-Man-(1-&gt;3)-[alpha-D-Man-(1-&gt;2)-alpha-D-Man-(1-&gt;3)-[alpha-D-Man-(1-&gt;6)]-alpha-D-Man-(1-&gt;6)]-beta-D-Man-(1-&gt;4)-beta-D-GlcNAc-(1-&gt;4)-alpha-D-GlcNAc-diphospho-di-trans,poly-cis-dolichol + a di-trans,poly-cis-dolichyl beta-D-mannosyl phosphate = an alpha-D-Man-(1-&gt;2)-alpha-D-Man-(1-&gt;2)-alpha-D-Man-(1-&gt;3)-[alpha-D-Man-(1-&gt;2)-alpha-D-Man-(1-&gt;3)-[alpha-D-Man-(1-&gt;2)-alpha-D-Man-(1-&gt;6)]-alpha-D-Man-(1-&gt;6)]-beta-D-Man-(1-&gt;4)-beta-D-GlcNAc-(1-&gt;4)-alpha-D-GlcNAc-diphospho-di-trans,poly-cis-dolichol + a di-trans,poly-cis-dolichyl phosphate + H(+). The protein operates within protein modification; protein glycosylation. In terms of biological role, catalyzes the transfer of mannose from Dol-P-Man to lipid-linked oligosaccharides. This Caenorhabditis elegans protein is Alpha-1,2-mannosyltransferase algn-9.